We begin with the raw amino-acid sequence, 463 residues long: Elongation factor 1-alpha 1 (463 aa).

The 238-residue stretch at 5–242 folds into the tr-type G domain; that stretch reads KIHINIVVIG…DAILPPARPT (238 aa). Positions 14-21 are G1; that stretch reads GHVDSGKS. Residue 14–21 coordinates GTP; sequence GHVDSGKS. The tract at residues 70 to 74 is G2; it reads GITID. The G3 stretch occupies residues 91-94; the sequence is DAPG. Residues 91–95 and 153–156 contribute to the GTP site; these read DAPGH and NKMD. The G4 stretch occupies residues 153–156; the sequence is NKMD. The G5 stretch occupies residues 194-196; it reads SGW. 5-glutamyl glycerylphosphorylethanolamine occurs at positions 301 and 374.

This sequence belongs to the TRAFAC class translation factor GTPase superfamily. Classic translation factor GTPase family. EF-Tu/EF-1A subfamily.

Its subcellular location is the cytoplasm. In terms of biological role, this protein promotes the GTP-dependent binding of aminoacyl-tRNA to the A-site of ribosomes during protein biosynthesis. This chain is Elongation factor 1-alpha 1, found in Drosophila melanogaster (Fruit fly).